A 259-amino-acid chain; its full sequence is 5'-nucleotidase SurE 1 (259 aa).

Positions 16, 17, 48, and 101 each coordinate a divalent metal cation.

It belongs to the SurE nucleotidase family. A divalent metal cation is required as a cofactor.

It localises to the cytoplasm. It carries out the reaction a ribonucleoside 5'-phosphate + H2O = a ribonucleoside + phosphate. Functionally, nucleotidase that shows phosphatase activity on nucleoside 5'-monophosphates. This chain is 5'-nucleotidase SurE 1, found in Burkholderia lata (strain ATCC 17760 / DSM 23089 / LMG 22485 / NCIMB 9086 / R18194 / 383).